Reading from the N-terminus, the 76-residue chain is Acyl carrier protein (76 aa).

In terms of domain architecture, Carrier spans 1 to 76 (MSVEEKVKKI…DAIDYIAGKQ (76 aa)). Ser36 is modified (O-(pantetheine 4'-phosphoryl)serine).

The protein belongs to the acyl carrier protein (ACP) family. 4'-phosphopantetheine is transferred from CoA to a specific serine of apo-ACP by AcpS. This modification is essential for activity because fatty acids are bound in thioester linkage to the sulfhydryl of the prosthetic group.

The protein resides in the cytoplasm. It functions in the pathway lipid metabolism; fatty acid biosynthesis. Its function is as follows. Carrier of the growing fatty acid chain in fatty acid biosynthesis. The protein is Acyl carrier protein of Oleidesulfovibrio alaskensis (strain ATCC BAA-1058 / DSM 17464 / G20) (Desulfovibrio alaskensis).